The chain runs to 1396 residues: DNA-directed RNA polymerase subunit beta' (1396 aa).

Zn(2+) is bound by residues cysteine 70, cysteine 72, cysteine 85, and cysteine 88. Positions 460, 462, and 464 each coordinate Mg(2+). Zn(2+)-binding residues include cysteine 814, cysteine 889, cysteine 896, and cysteine 899.

This sequence belongs to the RNA polymerase beta' chain family. The RNAP catalytic core consists of 2 alpha, 1 beta, 1 beta' and 1 omega subunit. When a sigma factor is associated with the core the holoenzyme is formed, which can initiate transcription. It depends on Mg(2+) as a cofactor. Zn(2+) is required as a cofactor.

It carries out the reaction RNA(n) + a ribonucleoside 5'-triphosphate = RNA(n+1) + diphosphate. DNA-dependent RNA polymerase catalyzes the transcription of DNA into RNA using the four ribonucleoside triphosphates as substrates. The polypeptide is DNA-directed RNA polymerase subunit beta' (Hahella chejuensis (strain KCTC 2396)).